Here is a 581-residue protein sequence, read N- to C-terminus: Leucine-rich repeat transmembrane neuronal protein 3 (581 aa).

An N-terminal signal peptide occupies residues 1 to 30; sequence MGFNVIRLLSGSAVALVIAPTVLLTMLSSA. An LRRNT domain is found at 31 to 61; the sequence is ERGCPKGCRCEGKMVYCESQKLQEIPSSISA. Residues 31–419 are Extracellular-facing; the sequence is ERGCPKGCRC…ADAEHISFHK (389 aa). LRR repeat units follow at residues 63 to 83, 86 to 107, 110 to 131, 134 to 155, 158 to 179, 182 to 203, 206 to 226, 230 to 251, 254 to 275, and 279 to 300; these read CLGLSLRYNSLQKLKYNQFKG, QLTWLYLDHNHISNIDENAFNG, RLKELILSSNRISYFLNNTFRP, NLRNLDLSYNQLHSLGSEQFRG, KLLSLHLRSNSLRTIPVRIFQD, NLELLDLGYNRIRSLARNVFAG, RLKELHLEHNQFSKLNLALFP, SLQNLYLQWNKISVIGQTMSWT, SLQRLDLSGNEIEAFSGPSVFQ, and NLQRLNLDSNKLTFIGQEILDS. A glycan (N-linked (GlcNAc...) asparagine) is linked at N126. An LRRCT domain is found at 312-363; sequence NIWECSRNICSLVNWLKSFKGLRENTIICASPKELQGVNVIDAVKNYSICGK. N357 carries N-linked (GlcNAc...) asparagine glycosylation. The interval 377–408 is disordered; it reads KPTFKPKLPRPKHESKPPLPPTVGATEPGPET. A helical transmembrane segment spans residues 420–440; the sequence is IIAGSVALFLSVLVILLVIYV. The Cytoplasmic portion of the chain corresponds to 441 to 581; it reads SWKRYPASMK…RISDHKQQLA (141 aa).

It belongs to the LRRTM family. Expressed in neuronal tissues.

It localises to the cell membrane. The protein resides in the postsynaptic cell membrane. In terms of biological role, exhibits a limited synaptogenic activity in vitro, restricted to excitatory presynaptic differentiation. May play a role in the development and maintenance of the vertebrate nervous system. The protein is Leucine-rich repeat transmembrane neuronal protein 3 (LRRTM3) of Homo sapiens (Human).